The sequence spans 367 residues: Cobalt-precorrin-5B C(1)-methyltransferase (367 aa).

Belongs to the CbiD family.

It carries out the reaction Co-precorrin-5B + S-adenosyl-L-methionine = Co-precorrin-6A + S-adenosyl-L-homocysteine. The protein operates within cofactor biosynthesis; adenosylcobalamin biosynthesis; cob(II)yrinate a,c-diamide from sirohydrochlorin (anaerobic route): step 6/10. Its function is as follows. Catalyzes the methylation of C-1 in cobalt-precorrin-5B to form cobalt-precorrin-6A. This chain is Cobalt-precorrin-5B C(1)-methyltransferase, found in Leptospira interrogans serogroup Icterohaemorrhagiae serovar copenhageni (strain Fiocruz L1-130).